The primary structure comprises 328 residues: Neuropeptides B/W receptor type 1 (328 aa).

At 1–37 (MDNASFSEPWPANASGPDPALSCSNASTLAPLPAPLA) the chain is on the extracellular side. N-linked (GlcNAc...) asparagine glycans are attached at residues Asn3, Asn13, and Asn25. The helical transmembrane segment at 38–61 (VAVPVVYAVICAVGLAGNSAVLYV) threads the bilayer. The Cytoplasmic portion of the chain corresponds to 62 to 72 (LLRAPRMKTVT). The chain crosses the membrane as a helical span at residues 73-97 (NLFILNLAIADELFTLVLPINIADF). Topologically, residues 98 to 112 (LLRQWPFGELMCKLI) are extracellular. Cysteines 109 and 188 form a disulfide. The chain crosses the membrane as a helical span at residues 113–132 (VAIDQYNTFSSLYFLTVMSA). Residues 133-157 (DRYLVVLATAESRRVAGRTYSAARA) are Cytoplasmic-facing. A helical membrane pass occupies residues 158–177 (VSLAVWGIVTLVVLPFAVFA). Residues 178-202 (RLDDEQGRRQCVLVFPQPEAFWWRA) are Extracellular-facing. Residues 203-224 (SRLYTLVLGFAIPVSTICVLYT) form a helical membrane-spanning segment. Residues 225-248 (TLLCRLHAMRLDSHAKALERAKKR) lie on the Cytoplasmic side of the membrane. Residues 249 to 273 (VTFLVVAILAVCLLCWTPYHLSTVV) traverse the membrane as a helical segment. At 274–283 (ALTTDLPQTP) the chain is on the extracellular side. The helical transmembrane segment at 284-298 (LVIAISYFITSLSYA) threads the bilayer. Residues 299–328 (NSCLNPFLYAFLDASFRRNLRQLITCRAAA) are Cytoplasmic-facing.

The protein belongs to the G-protein coupled receptor 1 family. Found in cerebellum and frontal cortex. Detected at high levels in hippocampus, amygdala and trachea; at moderate levels in fetal brain, pituitary gland and prostate. Not in caudate, accumbens, kidney or liver. Also detected at high levels in lung carcinoma.

Its subcellular location is the cell membrane. Functionally, interacts specifically with a number of opioid ligands. Receptor for neuropeptides B and W, which may be involved in neuroendocrine system regulation, food intake and the organization of other signals. Has a higher affinity for neuropeptide B. This chain is Neuropeptides B/W receptor type 1 (NPBWR1), found in Homo sapiens (Human).